The sequence spans 369 residues: Chaperone protein DnaJ (369 aa).

A J domain is found at 4 to 69 (SYYEILEVEK…KKRALYDRYG (66 aa)). The CR-type zinc-finger motif lies at 130 to 207 (GCKKTIKVQY…CKGKTYILKD (78 aa)). Zn(2+) is bound by residues Cys143, Cys146, Cys159, Cys162, Cys181, Cys184, Cys195, and Cys198. CXXCXGXG motif repeat units follow at residues 143–150 (CESCDGTG), 159–166 (CKQCNGQG), 181–188 (CGACQGKG), and 195–202 (CQACKGKT).

This sequence belongs to the DnaJ family. As to quaternary structure, homodimer. Zn(2+) is required as a cofactor.

The protein localises to the cytoplasm. Functionally, participates actively in the response to hyperosmotic and heat shock by preventing the aggregation of stress-denatured proteins and by disaggregating proteins, also in an autonomous, DnaK-independent fashion. Unfolded proteins bind initially to DnaJ; upon interaction with the DnaJ-bound protein, DnaK hydrolyzes its bound ATP, resulting in the formation of a stable complex. GrpE releases ADP from DnaK; ATP binding to DnaK triggers the release of the substrate protein, thus completing the reaction cycle. Several rounds of ATP-dependent interactions between DnaJ, DnaK and GrpE are required for fully efficient folding. Also involved, together with DnaK and GrpE, in the DNA replication of plasmids through activation of initiation proteins. The chain is Chaperone protein DnaJ from Helicobacter pylori (strain ATCC 700392 / 26695) (Campylobacter pylori).